Consider the following 202-residue polypeptide: MKVSDRRKFEKANFDEFESALNNKNDLVHCPSITLFESIPTEVRSFYEDEKSGLIKVVKFRTGAMDRKRSFEKVVISVMVGKNVKKFLTFVEDEPDFQGGPIPSKYLVPKKINLMVYTLFQVHTLKFNRKDYDTLSLFYLNRGYYNELSFRVLERCHEIASARPNDSSTMRTFTDFVSGAPIVRSLQKSTIRKYGYNLAAYT.

It belongs to the helicase family. Yeast subtelomeric Y' repeat subfamily.

This is an uncharacterized protein from Saccharomyces cerevisiae (strain ATCC 204508 / S288c) (Baker's yeast).